The following is a 912-amino-acid chain: Non-lysosomal glucosylceramidase (912 aa).

Positions 886 to 912 are disordered; that stretch reads HKKNSSRPAVTQGTAPSQPECGPKRSL. Polar residues predominate over residues 891–902; it reads SRPAVTQGTAPS.

It belongs to the non-lysosomal glucosylceramidase family.

The protein localises to the endoplasmic reticulum membrane. The protein resides in the golgi apparatus membrane. It catalyses the reaction a beta-D-glucosyl-(1&lt;-&gt;1')-N-acylsphing-4-enine + H2O = an N-acylsphing-4-enine + D-glucose. It carries out the reaction a beta-D-galactosyl-(1&lt;-&gt;1')-N-acylsphing-4-enine + H2O = an N-acylsphing-4-enine + D-galactose. The enzyme catalyses beta-D-glucosyl-(1-&gt;3)-O-lithocholate + H2O = lithocholate + D-glucose. The catalysed reaction is beta-D-glucosyl-(1-&gt;3)-O-chenodeoxycholate + H2O = chenodeoxycholate + D-glucose. It catalyses the reaction a di-trans,poly-cis-dolichyl beta-D-glucosyl phosphate + chenodeoxycholate = beta-D-glucosyl-(1-&gt;3)-O-chenodeoxycholate + a di-trans,poly-cis-dolichyl phosphate + H(+). It carries out the reaction octyl beta-D-glucose + chenodeoxycholate = beta-D-glucosyl-(1-&gt;3)-O-chenodeoxycholate + octan-1-ol. The enzyme catalyses cholesteryl 3-beta-D-glucoside + H2O = cholesterol + D-glucose. The catalysed reaction is a beta-D-glucosyl-(1&lt;-&gt;1')-N-acylsphing-4-enine + cholesterol = cholesteryl 3-beta-D-glucoside + an N-acylsphing-4-enine. It catalyses the reaction beta-D-glucosyl-N-(9Z-octadecenoyl)-sphing-4E-enine + cholesterol = N-(9Z-octadecenoyl)-sphing-4-enine + cholesteryl 3-beta-D-glucoside. It carries out the reaction a beta-D-galactosyl-(1&lt;-&gt;1')-N-acylsphing-4-enine + cholesterol = cholesteryl 3-beta-D-galactoside + an N-acylsphing-4-enine. The enzyme catalyses 1-(beta-D-galactosyl)-N-dodecanoylsphing-4-enine + cholesterol = cholesteryl 3-beta-D-galactoside + N-dodecanoylsphing-4-enine. It functions in the pathway lipid metabolism; sphingolipid metabolism. It participates in steroid metabolism; cholesterol metabolism. Its activity is regulated as follows. Enzymatic activity is dependent on membrane association and requires the presence of lipids. Its function is as follows. Non-lysosomal glucosylceramidase that catalyzes the hydrolysis of glucosylceramides/GlcCers (such as beta-D-glucosyl-(1&lt;-&gt;1')-N-acylsphing-4-enine) to free glucose and ceramides (such as N-acylsphing-4-enine). GlcCers are membrane glycosphingolipids that have a wide intracellular distribution. They are the main precursors of more complex glycosphingolipids that play a role in cellular growth, differentiation, adhesion, signaling, cytoskeletal dynamics and membrane properties. Involved in the transglucosylation of cholesterol, transfers glucose from GlcCer to cholesterol, thereby modifying its water solubility and biological properties. Under specific conditions, may catalyze the reverse reaction, transferring glucose from cholesteryl-3-beta-D-glucoside to ceramide (such as N-acylsphing-4-enine). May play a role in the metabolism of bile acids. Able to hydrolyze bile acid 3-O-glucosides as well as to produce bile acid-glucose conjugates thanks to a bile acid glucosyl transferase activity. Catalyzes the hydrolysis of galactosylceramides/GalCers (such as beta-D-galactosyl-(1&lt;-&gt;1')-N-acylsphing-4-enine), as well as the galactosyl transfer between GalCers and cholesterol in vitro with lower activity compared with their activity against GlcCers. This chain is Non-lysosomal glucosylceramidase, found in Rattus norvegicus (Rat).